A 440-amino-acid polypeptide reads, in one-letter code: Ribosomal protein uS12 methylthiotransferase RimO (440 aa).

The region spanning 6–116 (PKVGFVSLGC…VVTAVHEVVP (111 aa)) is the MTTase N-terminal domain. [4Fe-4S] cluster contacts are provided by Cys15, Cys51, Cys80, Cys149, Cys153, and Cys156. In terms of domain architecture, Radical SAM core spans 135-373 (LTPRHYAYLK…MAHQQAISAA (239 aa)). Residues 376-440 (QLKVGKEIEV…DEYDLWAELV (65 aa)) enclose the TRAM domain.

It belongs to the methylthiotransferase family. RimO subfamily. The cofactor is [4Fe-4S] cluster.

It is found in the cytoplasm. It carries out the reaction L-aspartate(89)-[ribosomal protein uS12]-hydrogen + (sulfur carrier)-SH + AH2 + 2 S-adenosyl-L-methionine = 3-methylsulfanyl-L-aspartate(89)-[ribosomal protein uS12]-hydrogen + (sulfur carrier)-H + 5'-deoxyadenosine + L-methionine + A + S-adenosyl-L-homocysteine + 2 H(+). In terms of biological role, catalyzes the methylthiolation of an aspartic acid residue of ribosomal protein uS12. The polypeptide is Ribosomal protein uS12 methylthiotransferase RimO (Pseudomonas aeruginosa (strain UCBPP-PA14)).